Here is a 93-residue protein sequence, read N- to C-terminus: Alpha-defensin 10 (93 aa).

The first 19 residues, 1–19 (MKTLVLLSALVLLAFQVQA), serve as a signal peptide directing secretion. Positions 20–58 (DPIQNTDEETKTEEQPGEDDQAVSVSFGDPEGSSLQEES) are excised as a propeptide. The tract at residues 22–56 (IQNTDEETKTEEQPGEDDQAVSVSFGDPEGSSLQE) is disordered. 3 cysteine pairs are disulfide-bonded: cysteine 64/cysteine 92, cysteine 66/cysteine 81, and cysteine 71/cysteine 91.

It belongs to the alpha-defensin family. Paneth cells of the small bowel.

It is found in the secreted. Probably contributes to the antimicrobial barrier function of the small bowel mucosa. The chain is Alpha-defensin 10 (Defa10) from Mus musculus (Mouse).